The chain runs to 338 residues: UDP-N-acetylenolpyruvoylglucosamine reductase (338 aa).

The FAD-binding PCMH-type domain occupies 17–188 (IAARTDWWID…MYVDYRLRLK (172 aa)). Arginine 164 is an active-site residue. Residue serine 237 is the Proton donor of the active site. Glutamate 333 is a catalytic residue.

The protein belongs to the MurB family. Requires FAD as cofactor.

Its subcellular location is the cytoplasm. It carries out the reaction UDP-N-acetyl-alpha-D-muramate + NADP(+) = UDP-N-acetyl-3-O-(1-carboxyvinyl)-alpha-D-glucosamine + NADPH + H(+). It participates in cell wall biogenesis; peptidoglycan biosynthesis. In terms of biological role, cell wall formation. This Porphyromonas gingivalis (strain ATCC BAA-308 / W83) protein is UDP-N-acetylenolpyruvoylglucosamine reductase.